Here is a 320-residue protein sequence, read N- to C-terminus: Ferrochelatase (320 aa).

Fe cation-binding residues include His194 and Glu275.

The protein belongs to the ferrochelatase family.

It is found in the cytoplasm. The catalysed reaction is heme b + 2 H(+) = protoporphyrin IX + Fe(2+). It functions in the pathway porphyrin-containing compound metabolism; protoheme biosynthesis; protoheme from protoporphyrin-IX: step 1/1. In terms of biological role, catalyzes the ferrous insertion into protoporphyrin IX. This Xylella fastidiosa (strain M12) protein is Ferrochelatase.